We begin with the raw amino-acid sequence, 226 residues long: Cytidylate kinase (226 aa).

11–19 (GPASAGKST) contacts ATP.

This sequence belongs to the cytidylate kinase family. Type 1 subfamily.

The protein localises to the cytoplasm. It carries out the reaction CMP + ATP = CDP + ADP. The catalysed reaction is dCMP + ATP = dCDP + ADP. In Limosilactobacillus fermentum (strain NBRC 3956 / LMG 18251) (Lactobacillus fermentum), this protein is Cytidylate kinase.